The chain runs to 524 residues: 2-isopropylmalate synthase (524 aa).

Positions 5 to 267 constitute a Pyruvate carboxyltransferase domain; that stretch reads VIIFDTTLRD…HTNIRHSEIH (263 aa). Positions 14, 202, 204, and 238 each coordinate Mn(2+). The interval 392-524 is regulatory domain; sequence KLEYLGVQSG…KTDKINTESV (133 aa).

It belongs to the alpha-IPM synthase/homocitrate synthase family. LeuA type 1 subfamily. In terms of assembly, homodimer. Requires Mn(2+) as cofactor.

Its subcellular location is the cytoplasm. The catalysed reaction is 3-methyl-2-oxobutanoate + acetyl-CoA + H2O = (2S)-2-isopropylmalate + CoA + H(+). The protein operates within amino-acid biosynthesis; L-leucine biosynthesis; L-leucine from 3-methyl-2-oxobutanoate: step 1/4. In terms of biological role, catalyzes the condensation of the acetyl group of acetyl-CoA with 3-methyl-2-oxobutanoate (2-ketoisovalerate) to form 3-carboxy-3-hydroxy-4-methylpentanoate (2-isopropylmalate). The protein is 2-isopropylmalate synthase of Aeromonas salmonicida (strain A449).